The chain runs to 254 residues: Aquaporin TIP1-2 (254 aa).

A run of 2 helical transmembrane segments spans residues Val24 to Phe44 and Ala56 to Gly76. The NPA 1 motif lies at Asn85–Ala87. 3 helical membrane passes run Ala103–Ile123, Ala144–Val164, and Val173–Phe193. Residues Asn199–Ala201 carry the NPA 2 motif. Residues Trp220–Gly240 form a helical membrane-spanning segment.

Belongs to the MIP/aquaporin (TC 1.A.8) family. TIP (TC 1.A.8.10) subfamily.

Its subcellular location is the vacuole membrane. In terms of biological role, aquaporins facilitate the transport of water and small neutral solutes across cell membranes. The polypeptide is Aquaporin TIP1-2 (TIP1-2) (Zea mays (Maize)).